The sequence spans 253 residues: Ubiquinone/menaquinone biosynthesis C-methyltransferase UbiE (253 aa).

S-adenosyl-L-methionine is bound by residues Thr-76, Asp-97, 125–126 (NA), and Ser-142.

This sequence belongs to the class I-like SAM-binding methyltransferase superfamily. MenG/UbiE family.

The enzyme catalyses a 2-demethylmenaquinol + S-adenosyl-L-methionine = a menaquinol + S-adenosyl-L-homocysteine + H(+). It catalyses the reaction a 2-methoxy-6-(all-trans-polyprenyl)benzene-1,4-diol + S-adenosyl-L-methionine = a 5-methoxy-2-methyl-3-(all-trans-polyprenyl)benzene-1,4-diol + S-adenosyl-L-homocysteine + H(+). It participates in quinol/quinone metabolism; menaquinone biosynthesis; menaquinol from 1,4-dihydroxy-2-naphthoate: step 2/2. It functions in the pathway cofactor biosynthesis; ubiquinone biosynthesis. Its function is as follows. Methyltransferase required for the conversion of demethylmenaquinol (DMKH2) to menaquinol (MKH2) and the conversion of 2-polyprenyl-6-methoxy-1,4-benzoquinol (DDMQH2) to 2-polyprenyl-3-methyl-6-methoxy-1,4-benzoquinol (DMQH2). In Xylella fastidiosa (strain M23), this protein is Ubiquinone/menaquinone biosynthesis C-methyltransferase UbiE.